The primary structure comprises 341 residues: L-threonine 3-dehydrogenase (341 aa).

Residue Cys-38 coordinates Zn(2+). Active-site charge relay system residues include Thr-40 and His-43. Zn(2+) is bound by residues His-63, Glu-64, Cys-93, Cys-96, Cys-99, and Cys-107. NAD(+)-binding positions include Ile-175, Asp-195, Arg-200, 262–264 (LGI), and 286–287 (IY).

It belongs to the zinc-containing alcohol dehydrogenase family. In terms of assembly, homotetramer. Zn(2+) serves as cofactor.

It localises to the cytoplasm. The enzyme catalyses L-threonine + NAD(+) = (2S)-2-amino-3-oxobutanoate + NADH + H(+). It functions in the pathway amino-acid degradation; L-threonine degradation via oxydo-reductase pathway; glycine from L-threonine: step 1/2. Functionally, catalyzes the NAD(+)-dependent oxidation of L-threonine to 2-amino-3-ketobutyrate. The polypeptide is L-threonine 3-dehydrogenase (Klebsiella pneumoniae (strain 342)).